Reading from the N-terminus, the 151-residue chain is Nucleoside diphosphate kinase (151 aa).

6 residues coordinate ATP: K11, F59, R87, T93, R104, and N114. H117 functions as the Pros-phosphohistidine intermediate in the catalytic mechanism.

Belongs to the NDK family. As to quaternary structure, homotetramer. It depends on Mg(2+) as a cofactor.

The protein resides in the cytoplasm. It carries out the reaction a 2'-deoxyribonucleoside 5'-diphosphate + ATP = a 2'-deoxyribonucleoside 5'-triphosphate + ADP. It catalyses the reaction a ribonucleoside 5'-diphosphate + ATP = a ribonucleoside 5'-triphosphate + ADP. Its function is as follows. Major role in the synthesis of nucleoside triphosphates other than ATP. The ATP gamma phosphate is transferred to the NDP beta phosphate via a ping-pong mechanism, using a phosphorylated active-site intermediate. In Prochlorococcus marinus (strain SARG / CCMP1375 / SS120), this protein is Nucleoside diphosphate kinase.